The sequence spans 287 residues: MKVNTNIISLKTQEYLRKNNEGMTQAQERLASGKRINSSLDDAAGLAVVTRMNVKSTGLDAASKNSSMGIDLLQTADSALSSMSSILQRMRQLAVQSSNGSFSDEDRKQYTAEFGSLIKELDHVADTTNYNNIKLLDQTATGAATQVSIQASDKANDLINIDLFNAKGLSAGTITLGSGSTVAGYSALSVADADSSQQATEAIDELINNISNGRALLGAGMSRLSYNVSNVNNQSIATKASASSIEDADMAAEMSEMTKYKILTQTSISMLSQANQTPQMLTQLINS.

This sequence belongs to the bacterial flagellin family.

The protein resides in the secreted. The protein localises to the bacterial flagellum. Flagellin is the subunit protein which polymerizes to form the filaments of bacterial flagella. This chain is Flagellin (flaA), found in Listeria monocytogenes serovar 1/2a (strain ATCC BAA-679 / EGD-e).